A 145-amino-acid chain; its full sequence is Cell wall teichoic acid glycosylation protein GtcA (145 aa).

Transmembrane regions (helical) follow at residues 21 to 41 (ILMY…TFWL), 52 to 69 (IANT…YFSN), 96 to 116 (FLTY…LSIN), and 121 to 141 (KIWT…WIIF).

It belongs to the GtrA family.

It is found in the cell membrane. Functionally, involved in the decoration of cell wall teichoic acid with galactose and glucose. This Listeria monocytogenes serovar 1/2a (strain ATCC BAA-679 / EGD-e) protein is Cell wall teichoic acid glycosylation protein GtcA (gtcA).